Here is a 166-residue protein sequence, read N- to C-terminus: Phospholipase A2 myotoxin inhibitor protein (166 aa).

The N-terminal stretch at 1–19 is a signal peptide; that stretch reads MRLILLSGLLLLGTFLANG. Positions 46 to 161 constitute a C-type lectin domain; it reads LKYAFLTVHK…CDDNLLVVCE (116 aa). 2 disulfides stabilise this stretch: cysteine 83–cysteine 160 and cysteine 138–cysteine 152. The N-linked (GlcNAc...) asparagine glycan is linked to asparagine 122.

It belongs to the alpha-type phospholipase A2 inhibitor family. In terms of assembly, oligomer. Homotrimer; non-covalently linked. Glycosylated. The glycosylation has no role in the association of this PLI and PA2 enzyme. As to expression, expressed by the liver.

It localises to the secreted. Functionally, this phospholipase A2 inhibitor binds directly phospholipase A2 in the presence or absence of calcium. Has anti-enzymatic, anti-myotoxic, anti-edema inducing, anti-cytotoxic, anti-bactericidal, and anti-lethal properties against basic and acidic phospholipases A2 from Bothrops venoms. This is Phospholipase A2 myotoxin inhibitor protein from Bothrops moojeni (Lance-headed viper).